The chain runs to 583 residues: Radixin (583 aa).

The 291-residue stretch at 5-295 (INVRVTTMDA…GNHELYMRRR (291 aa)) folds into the FERM domain. A 1,2-diacyl-sn-glycero-3-phospho-(1D-myo-inositol) is bound by residues 60 to 63 (KLNK) and Lys278. 2 disordered regions span residues 310 to 336 (REEKHQKQLERAQLENEKKKREIAEKE) and 436 to 527 (KKKE…VKKQ). Basic and acidic residues-rich tracts occupy residues 436–447 (KKKEEEASEWQH) and 455–464 (DLEKTKEELK). A compositionally biased stretch (pro residues) spans 469–480 (APPPPPPPPVIP). Basic and acidic residues-rich tracts occupy residues 483 to 492 (ENEHDEHDEN) and 506 to 525 (MNHRSEEERVTETQKNERVK).

It localises to the cell membrane. It is found in the cytoplasm. The protein resides in the cytoskeleton. Probably plays a crucial role in the binding of the barbed end of actin filaments to the plasma membrane. The polypeptide is Radixin (RDX) (Gallus gallus (Chicken)).